The sequence spans 125 residues: Cytochrome c' (125 aa).

Heme c is bound by residues Arg-10, Glu-67, Cys-116, Cys-119, and His-120.

In terms of assembly, homodimer. Binds 1 heme c group covalently per subunit.

Functionally, cytochrome c' is the most widely occurring bacterial c-type cytochrome. Cytochromes c' are high-spin proteins and the heme has no sixth ligand. Their exact function is not known. This Pararhodospirillum photometricum (Rhodospirillum photometricum) protein is Cytochrome c'.